We begin with the raw amino-acid sequence, 279 residues long: 32 kDa beta-galactoside-binding lectin (279 aa).

Galectin domains follow at residues 13 to 144 and 152 to 279; these read YRSV…VHWG and YESG…IQIQ. 213–219 is an a beta-D-galactoside binding site; the sequence is WGNEERE.

In terms of processing, the N-terminus is blocked.

In terms of biological role, binds galactose. This is 32 kDa beta-galactoside-binding lectin (lec-1) from Caenorhabditis elegans.